The following is a 1955-amino-acid chain: Protocadherin-15 (1955 aa).

The N-terminal stretch at 1–26 (MFRQFYLWTCLASGIILGSLFEICLG) is a signal peptide. Topologically, residues 27 to 1376 (QYDDDCKLAR…GESLGYTEGA (1350 aa)) are extracellular. Residues C32 and C120 are joined by a disulfide bond. Cadherin domains lie at 40–147 (PATI…SPTF), 148–265 (KHES…GPMF), 278–395 (RPLT…SPYF), 396–509 (TMPS…TPTF), 510–616 (PEIS…PPRF), 617–717 (PQLM…APVF), 719–819 (PYLP…SPVF), 820–926 (TNST…PPVF), 927–1035 (SKRI…IPRF), 1037–1144 (QEEY…PPVF), and 1145–1259 (QKKF…PPTL). Residues N52, N97, and N201 are each glycosylated (N-linked (GlcNAc...) asparagine). Residues N419, N559, N662, N724, N768, N821, and N851 are each glycosylated (N-linked (GlcNAc...) asparagine). 3 N-linked (GlcNAc...) asparagine glycosylation sites follow: N1064, N1084, and N1175. Residues 1377–1397 (LLALAFIIILCCIPAILVVLV) traverse the membrane as a helical segment. Topologically, residues 1398-1955 (SYRQFKVRQA…KQSHSQSTSL (558 aa)) are cytoplasmic. A compositionally biased stretch (pro residues) spans 1426–1444 (VPAPAPVAAPPPPPPPPPG). Disordered stretches follow at residues 1426–1446 (VPAP…PGAH), 1601–1623 (QGTR…GSSN), 1745–1766 (CPLP…APLA), and 1928–1955 (ITSE…STSL). Residues 1928–1941 (ITSEQNKGSLNNIV) are compositionally biased toward polar residues.

In terms of assembly, antiparallel heterodimer with CDH23. Found in a complex with TMIE and LHFPL5. Interacts with LHFPL5/TMHS; this interaction is required for efficient localization to hair bundles. Interacts with MYO7A. Interacts with USH1G; this interaction may recruit USH1G to the plasma membrane. Interacts with TOMT. Isoforms CD1 and CD3 interact with TMC1 (via N-terminus) and TMC2 (via N-terminus). As to expression, expressed in brain, lung, kidney, spleen and testis. Found also in the inner and outer synaptic layers, and the nerve fiber layer in adult and fetal retinas. Found in the supporting cells, outer sulcus cells and spiral ganglion of fetal cochlea. Expressed in cytotoxic tumor-derived T- and NK-cell lines as well as biopsies of nasal NK/T-cell lymphomas. Not detected in normal or in vitro activated peripheral blood cells, CD4 or CD8 lymphocytes or NK cells. Isoform 3 is expressed in brain, heart, cerebellum and kidney. CD1 isoforms, such as isoform 1, have a limited pattern of expression and is detected in testis, retina and cochlea. CD2 isoforms, such as isoforms 4 and 5, are expressed in heart, kidney, thymus, spleen, testis, retina and cochlea. CD3 isoforms, such as isoform 6, are widely expressed.

Its subcellular location is the cell membrane. It localises to the secreted. Calcium-dependent cell-adhesion protein. Essential for maintenance of normal retinal and cochlear function. The chain is Protocadherin-15 (PCDH15) from Homo sapiens (Human).